A 218-amino-acid polypeptide reads, in one-letter code: Glutathione S-transferase class-mu 26 kDa isozyme 51 (218 aa).

A GST N-terminal domain is found at 2–83; that stretch reads PAKLGYWKIR…YIADKHGMLG (82 aa). Glutathione contacts are provided by residues 7-8, 41-45, 54-55, and 67-68; these read YW, WFGDK, NL, and QS. The region spanning 85–203 is the GST C-terminal domain; the sequence is TPEERARISM…ESEKFIKWPL (119 aa). Residue Y111 coordinates substrate.

Belongs to the GST superfamily. Mu family. As to quaternary structure, homodimer.

Its subcellular location is the cytoplasm. The enzyme catalyses RX + glutathione = an S-substituted glutathione + a halide anion + H(+). Functionally, conjugation of reduced glutathione to a wide number of exogenous and endogenous hydrophobic electrophiles. Its function is as follows. GST isoenzymes appear to play a central role in the parasite detoxification system. Other functions are also suspected including a role in increasing the solubility of haematin in the parasite gut. The chain is Glutathione S-transferase class-mu 26 kDa isozyme 51 from Fasciola hepatica (Liver fluke).